Reading from the N-terminus, the 273-residue chain is LDMGHMVNAIAQIDEFVNLGANSIETDVSFDDSANPEYTYHGVPCDCGGTCTKWEYFNEFLKGLRKATTPGDSKYHEKLVLVVFDLKTSSLYDNQASDAGKKLAKSLLQNYWNNGNNGGRAYIVLSIPNLAHYKLITGFKETLTSEGHPELMDKVGYDFSGNDEIGDVAKTYKKAGVTGHVWQSDGITNCLLRGLDRVRKAVANRDSSNGYINKVYYWTVDKRATTRDALDAGVDGIMTNYPDVIADVLNESAYKAKFRIASYDDNPWETFKN.

His-5 is a catalytic residue. The Mg(2+) site is built by Glu-25 and Asp-27. His-41 (nucleophile) is an active-site residue. 2 disulfides stabilise this stretch: Cys-45–Cys-51 and Cys-47–Cys-190. Mg(2+) is bound at residue Asp-85. Residue Asn-250 is glycosylated (N-linked (GlcNAc...) asparagine).

This sequence belongs to the arthropod phospholipase D family. Class II subfamily. Mg(2+) is required as a cofactor. Expressed by the venom gland.

It localises to the secreted. The catalysed reaction is an N-(acyl)-sphingosylphosphocholine = an N-(acyl)-sphingosyl-1,3-cyclic phosphate + choline. It carries out the reaction an N-(acyl)-sphingosylphosphoethanolamine = an N-(acyl)-sphingosyl-1,3-cyclic phosphate + ethanolamine. The enzyme catalyses a 1-acyl-sn-glycero-3-phosphocholine = a 1-acyl-sn-glycero-2,3-cyclic phosphate + choline. It catalyses the reaction a 1-acyl-sn-glycero-3-phosphoethanolamine = a 1-acyl-sn-glycero-2,3-cyclic phosphate + ethanolamine. In terms of biological role, dermonecrotic toxins cleave the phosphodiester linkage between the phosphate and headgroup of certain phospholipids (sphingolipid and lysolipid substrates), forming an alcohol (often choline) and a cyclic phosphate. This toxin acts on sphingomyelin (SM). It may also act on ceramide phosphoethanolamine (CPE), lysophosphatidylcholine (LPC) and lysophosphatidylethanolamine (LPE), but not on lysophosphatidylserine (LPS), and lysophosphatidylglycerol (LPG). It acts by transphosphatidylation, releasing exclusively cyclic phosphate products as second products. Induces dermonecrosis, hemolysis, increased vascular permeability, edema, inflammatory response, and platelet aggregation. In Loxosceles deserta (Desert recluse spider), this protein is Dermonecrotic toxin LdSicTox-alphaIB1bi.